A 125-amino-acid chain; its full sequence is Probable 4-amino-4-deoxy-L-arabinose-phosphoundecaprenol flippase subunit ArnF (125 aa).

Residues 1–2 (MG) lie on the Cytoplasmic side of the membrane. A helical transmembrane segment spans residues 3 to 23 (VMWGLISVAIASLAQLSLGFA). The Periplasmic segment spans residues 24–33 (MMRLPSIAHP). Residues 34 to 54 (LAFISGLGAFNAATLALFAGL) traverse the membrane as a helical segment. Topologically, residues 55-76 (AGYLVSVFCWQKTLHMLALSKA) are cytoplasmic. The chain crosses the membrane as a helical span at residues 77–97 (YALLSLSYVLVWVASMLLPGL). Topologically, residues 98-100 (QGA) are periplasmic. A helical transmembrane segment spans residues 101 to 121 (FSLKAMLGVLCIMAGVMLIFL). Residues 122–125 (PARS) lie on the Cytoplasmic side of the membrane.

The protein belongs to the ArnF family. Heterodimer of ArnE and ArnF.

The protein resides in the cell inner membrane. Its pathway is bacterial outer membrane biogenesis; lipopolysaccharide biosynthesis. Its function is as follows. Translocates 4-amino-4-deoxy-L-arabinose-phosphoundecaprenol (alpha-L-Ara4N-phosphoundecaprenol) from the cytoplasmic to the periplasmic side of the inner membrane. The chain is Probable 4-amino-4-deoxy-L-arabinose-phosphoundecaprenol flippase subunit ArnF from Salmonella paratyphi A (strain ATCC 9150 / SARB42).